Consider the following 329-residue polypeptide: Neuropeptides B/W receptor type 1 (329 aa).

Topologically, residues 1–39 are extracellular; that stretch reads MHNLSLFEPGRGNVSCGGPFLGCPNESNPAPLPLPQPLA. Asn3, Asn13, and Asn25 each carry an N-linked (GlcNAc...) asparagine glycan. The chain crosses the membrane as a helical span at residues 40-63; the sequence is VAVPVVYGVICAVGLAGNSAVLYV. The Cytoplasmic portion of the chain corresponds to 64 to 74; it reads LLRTPRMKTVT. Residues 75-99 traverse the membrane as a helical segment; it reads NVFILNLAIADELFTLVLPINIADF. The Extracellular segment spans residues 100–114; sequence LLRRWPFGEVMCKLI. Cys111 and Cys190 are disulfide-bonded. A helical transmembrane segment spans residues 115-134; the sequence is VAVDQYNTFSSLYFLAVMSA. Residues 135–159 lie on the Cytoplasmic side of the membrane; the sequence is DRYLVVLATAESRRVSGRTYGAARA. Residues 160-179 form a helical membrane-spanning segment; that stretch reads VSLAVWALVTLVVLPFAVFA. The Extracellular segment spans residues 180 to 204; it reads RLDEEQGRRQCVLVFPQPEAFWWRA. Residues 205-226 form a helical membrane-spanning segment; the sequence is SRLYTLVLGFAIPVSTICALYI. Topologically, residues 227–250 are cytoplasmic; the sequence is TLLCRLRAIQLDSHAKALDRAKKR. A helical transmembrane segment spans residues 251 to 275; sequence VTLLVVAILAVCLLCWTPYHLSTIV. The Extracellular portion of the chain corresponds to 276-285; it reads ALTTDLPQTP. The helical transmembrane segment at 286–300 threads the bilayer; that stretch reads LVIGISYFITSLSYA. Residues 301–329 lie on the Cytoplasmic side of the membrane; sequence NSCLNPFLYAFLDDSFRRSLRQLVSCRTA.

Belongs to the G-protein coupled receptor 1 family.

It localises to the cell membrane. Its function is as follows. Interacts specifically with a number of opioid ligands. Receptor for neuropeptides B and W, which may be involved in neuroendocrine system regulation, food intake and the organization of other signals. The chain is Neuropeptides B/W receptor type 1 (Npbwr1) from Rattus norvegicus (Rat).